The primary structure comprises 171 residues: Neuronal vesicle trafficking-associated protein 2 (171 aa).

The disordered stretch occupies residues 1 to 21 (MVKLNSNPSEKGAKPPSVEDG). Topologically, residues 1 to 71 (MVKLNSNPSE…FRVPKIAEFT (71 aa)) are cytoplasmic. Residues 72–92 (VTILVSLALAFLACIVFLVVY) form a helical; Signal-anchor for type II membrane protein membrane-spanning segment. The Lumenal portion of the chain corresponds to 93–171 (KAFTYDHSCP…EPKPPKTQGH (79 aa)).

The protein belongs to the NSG family.

The protein localises to the membrane. It is found in the golgi apparatus. Its subcellular location is the trans-Golgi network membrane. It localises to the cell projection. The protein resides in the dendrite. The protein localises to the endosome membrane. It is found in the early endosome membrane. Its subcellular location is the late endosome membrane. It localises to the lysosome lumen. The protein resides in the cytoplasmic vesicle membrane. The protein localises to the golgi stack membrane. It is found in the endosome. Its subcellular location is the multivesicular body membrane. This chain is Neuronal vesicle trafficking-associated protein 2, found in Bos taurus (Bovine).